Consider the following 99-residue polypeptide: Putative gene 45 protein (99 aa).

The polypeptide is Putative gene 45 protein (45) (Bacillus phage SP01 (Bacteriophage SP01)).